We begin with the raw amino-acid sequence, 130 residues long: Lysozyme C, kidney isozyme (130 aa).

Residues lysine 1–valine 130 form the C-type lysozyme domain. Cystine bridges form between cysteine 6–cysteine 128, cysteine 30–cysteine 116, cysteine 65–cysteine 81, and cysteine 77–cysteine 95. Catalysis depends on residues glutamate 35 and aspartate 53.

This sequence belongs to the glycosyl hydrolase 22 family. As to quaternary structure, monomer.

It is found in the secreted. It catalyses the reaction Hydrolysis of (1-&gt;4)-beta-linkages between N-acetylmuramic acid and N-acetyl-D-glucosamine residues in a peptidoglycan and between N-acetyl-D-glucosamine residues in chitodextrins.. Its function is as follows. Lysozymes have primarily a bacteriolytic function; those in tissues and body fluids are associated with the monocyte-macrophage system and enhance the activity of immunoagents. The protein is Lysozyme C, kidney isozyme of Ovis aries (Sheep).